Here is a 198-residue protein sequence, read N- to C-terminus: Ribosome maturation factor RimP (198 aa).

It belongs to the RimP family.

The protein localises to the cytoplasm. Functionally, required for maturation of 30S ribosomal subunits. In Rhizobium etli (strain ATCC 51251 / DSM 11541 / JCM 21823 / NBRC 15573 / CFN 42), this protein is Ribosome maturation factor RimP.